The chain runs to 130 residues: kinetoplast-associated protein 2-1 (130 aa).

The propeptide occupies M1 to A10. Residues L89–K130 form a disordered region. Positions K92–Q105 are enriched in basic and acidic residues. Basic residues predominate over residues K106–K130.

It belongs to the KAP family. In terms of assembly, associates with the kinetoplast DNA network.

Its subcellular location is the mitochondrion matrix. It localises to the kinetoplast. Histone H1-like DNA-binding protein involved in the organization and segregation of kinetoplast DNA (kDNA). The mitochondrial DNA of kinetoplastid protozoa consists of about 5,000 minicircles and 20 to 30 maxicircles. These circular DNAs are held together by catenation into a highly organized compact disk structure referred to as a kinetoplast DNA (kDNA) network. Binds preferentially to a specific fragment of minicircle DNA and is able to compact kDNA networks through DNA charge neutralization and condensation. This is kinetoplast-associated protein 2-1 (KAP2-1) from Crithidia fasciculata.